Consider the following 236-residue polypeptide: Biosynthetic peptidoglycan transglycosylase (236 aa).

The helical transmembrane segment at Ala12–Pro31 threads the bilayer.

This sequence belongs to the glycosyltransferase 51 family.

It localises to the cell inner membrane. The enzyme catalyses [GlcNAc-(1-&gt;4)-Mur2Ac(oyl-L-Ala-gamma-D-Glu-L-Lys-D-Ala-D-Ala)](n)-di-trans,octa-cis-undecaprenyl diphosphate + beta-D-GlcNAc-(1-&gt;4)-Mur2Ac(oyl-L-Ala-gamma-D-Glu-L-Lys-D-Ala-D-Ala)-di-trans,octa-cis-undecaprenyl diphosphate = [GlcNAc-(1-&gt;4)-Mur2Ac(oyl-L-Ala-gamma-D-Glu-L-Lys-D-Ala-D-Ala)](n+1)-di-trans,octa-cis-undecaprenyl diphosphate + di-trans,octa-cis-undecaprenyl diphosphate + H(+). Its pathway is cell wall biogenesis; peptidoglycan biosynthesis. Peptidoglycan polymerase that catalyzes glycan chain elongation from lipid-linked precursors. This Pseudomonas putida (strain ATCC 47054 / DSM 6125 / CFBP 8728 / NCIMB 11950 / KT2440) protein is Biosynthetic peptidoglycan transglycosylase.